The chain runs to 211 residues: Holliday junction resolvase RecU (211 aa).

Mg(2+) contacts are provided by T95, D97, E110, and Q129.

This sequence belongs to the RecU family. Mg(2+) is required as a cofactor.

The protein resides in the cytoplasm. It carries out the reaction Endonucleolytic cleavage at a junction such as a reciprocal single-stranded crossover between two homologous DNA duplexes (Holliday junction).. Endonuclease that resolves Holliday junction intermediates in genetic recombination. Cleaves mobile four-strand junctions by introducing symmetrical nicks in paired strands. Promotes annealing of linear ssDNA with homologous dsDNA. Required for DNA repair, homologous recombination and chromosome segregation. This is Holliday junction resolvase RecU from Lactobacillus acidophilus (strain ATCC 700396 / NCK56 / N2 / NCFM).